The sequence spans 274 residues: Diaminopimelate epimerase (274 aa).

Substrate contacts are provided by Asn11, Gln44, and Asn64. Residue Cys73 is the Proton donor of the active site. Residues 74–75 (GN), Asn157, Asn190, and 208–209 (ER) each bind substrate. Cys217 serves as the catalytic Proton acceptor. 218–219 (GS) serves as a coordination point for substrate.

It belongs to the diaminopimelate epimerase family. Homodimer.

It localises to the cytoplasm. It catalyses the reaction (2S,6S)-2,6-diaminopimelate = meso-2,6-diaminopimelate. The protein operates within amino-acid biosynthesis; L-lysine biosynthesis via DAP pathway; DL-2,6-diaminopimelate from LL-2,6-diaminopimelate: step 1/1. In terms of biological role, catalyzes the stereoinversion of LL-2,6-diaminopimelate (L,L-DAP) to meso-diaminopimelate (meso-DAP), a precursor of L-lysine and an essential component of the bacterial peptidoglycan. The sequence is that of Diaminopimelate epimerase from Cronobacter sakazakii (strain ATCC BAA-894) (Enterobacter sakazakii).